We begin with the raw amino-acid sequence, 897 residues long: Transportin-2 (897 aa).

20 HEAT repeats span residues 9 to 36, 41 to 79, 88 to 121, 127 to 164, 171 to 201, 214 to 241, 253 to 280, 296 to 386, 394 to 422, 434 to 461, 475 to 508, 516 to 549, 557 to 595, 603 to 654, 665 to 696, 704 to 737, 745 to 790, 798 to 831, 840 to 871, and 874 to 894; these read GLQQ…DKLK, FPDF…AHYQ, FIKQ…KGEL, LLPQ…LDSD, NIMI…QFIM, FIEH…VMLL, HSII…FWLT, VQLI…LANV, HLLP…GAIA, PELI…TLSR, LKPL…EEEA, LSYI…ADSV, EYIQ…TALQ, EPVY…GLGG, IMTL…KACF, AEFM…MQMG, QMVL…YVCP, QQFI…IGVN, IFFC…KDQV, and DNWQ…LAAF. Residues 31 to 99 enclose the Importin N-terminal domain; that stretch reads VQDKLKQLNQ…KQECLNNIGD (69 aa). Positions 325-364 are disordered; the sequence is AVPDSEQDIKPRFHKSRTVTLPHEAERPDGSEDAEDDDDD. Residues 355-364 are compositionally biased toward acidic residues; sequence SEDAEDDDDD. Residue Lys862 is modified to N6-acetyllysine.

Belongs to the importin beta family. Importin beta-2 subfamily.

It localises to the cytoplasm. It is found in the nucleus. Probably functions in nuclear protein import as nuclear transport receptor. Serves as receptor for nuclear localization signals (NLS) in cargo substrates. Is thought to mediate docking of the importin/substrate complex to the nuclear pore complex (NPC) through binding to nucleoporin and the complex is subsequently translocated through the pore by an energy requiring, Ran-dependent mechanism. At the nucleoplasmic side of the NPC, Ran binds to the importin, the importin/substrate complex dissociates and importin is re-exported from the nucleus to the cytoplasm where GTP hydrolysis releases Ran. The directionality of nuclear import is thought to be conferred by an asymmetric distribution of the GTP- and GDP-bound forms of Ran between the cytoplasm and nucleus. In Homo sapiens (Human), this protein is Transportin-2 (TNPO2).